We begin with the raw amino-acid sequence, 198 residues long: Glycerol-3-phosphate acyltransferase (198 aa).

Helical transmembrane passes span 4–24 (LALI…AVLI), 53–75 (SAAG…GGYF), 80–102 (PFML…FFHF), 112–132 (LGAL…CWVV), and 134–154 (VLVT…APLF).

The protein belongs to the PlsY family. In terms of assembly, probably interacts with PlsX.

It is found in the cell inner membrane. The enzyme catalyses an acyl phosphate + sn-glycerol 3-phosphate = a 1-acyl-sn-glycero-3-phosphate + phosphate. The protein operates within lipid metabolism; phospholipid metabolism. Catalyzes the transfer of an acyl group from acyl-phosphate (acyl-PO(4)) to glycerol-3-phosphate (G3P) to form lysophosphatidic acid (LPA). This enzyme utilizes acyl-phosphate as fatty acyl donor, but not acyl-CoA or acyl-ACP. The polypeptide is Glycerol-3-phosphate acyltransferase (Aliivibrio fischeri (strain ATCC 700601 / ES114) (Vibrio fischeri)).